A 1147-amino-acid polypeptide reads, in one-letter code: Tip elongation aberrant protein 1 (1147 aa).

Residues 1–16 are compositionally biased toward basic residues; the sequence is MSFLFKRNKGSAHKPT. The tract at residues 1 to 64 is disordered; it reads MSFLFKRNKG…TGSGSHITAS (64 aa). The segment covering 18 to 32 has biased composition (polar residues); it reads PNFSKTSTTPSTSQL. Kelch repeat units lie at residues 94–144, 146–198, 199–253, 254–303, 305–351, and 355–402; these read EIYI…LIGN, FIVF…CLGS, KICL…TFSD, KLYI…VVEG, LYVF…TLSC, and TLVL…SNST. Disordered stretches follow at residues 384 to 403 and 408 to 547; these read SVPT…NSTG and SAFN…NAQS. Polar residues-rich tracts occupy residues 385 to 403, 408 to 465, and 472 to 489; these read VPTT…NSTG, SAFN…SNDL, and TRSN…LNSH. Residues 502–512 show a composition bias toward low complexity; that stretch reads SSLNSQQLSNQ. Serine 503 is subject to Phosphoserine. The segment covering 519 to 547 has biased composition (polar residues); that stretch reads VSPTLSFVPSSHSMEQGNGSVASANNAQS. The tract at residues 538 to 1147 is interaction with tea4; that stretch reads SVASANNAQS…AKEPVHDNEN (610 aa). Coiled coils occupy residues 611–649, 716–838, 879–990, and 1084–1105; these read KLYE…LEKV, QTSS…IIDA, KNNE…ALEE, and IKSL…AKEK. The tract at residues 948-1147 is retention at microtubule cell ends; that stretch reads KALEQRNTGA…AKEPVHDNEN (200 aa).

In terms of assembly, major component of the tea1 cell-end complex. Interacts with rax2, tea4 and tip1. Interacts with for3 in the presence of tea4.

The protein resides in the cytoplasm. It localises to the cytoskeleton. Cell polarity protein. Acts as an end marker, directing the growth machinery to the cell poles. Involved in the regulation of microtubular organization, affecting the maintenance of a single central axis. Prevents the curling of microtubule tips around the cell ends and is required for the retention of polarity factors such as pom1, tip1 and tea2 at the cell ends, necessary for the cell to grow in a straight line. Links tip1 and tea4 in a common complex. In Schizosaccharomyces pombe (strain 972 / ATCC 24843) (Fission yeast), this protein is Tip elongation aberrant protein 1 (tea1).